The primary structure comprises 37 residues: Palicourein (37 aa).

Positions 1 to 37 (GDPTFCGETCRVIPVCTYSAALGCTCDDRSDGLCKRN) form a cross-link, cyclopeptide (Gly-Asn). Intrachain disulfides connect Cys-6-Cys-24, Cys-10-Cys-26, and Cys-16-Cys-34.

Belongs to the cyclotide family. Post-translationally, this is a cyclic peptide.

Its function is as follows. Probably participates in a plant defense mechanism. Inhibits the cytopathic effects of the human immunodeficiency virus. In Palicourea condensata (Cappel), this protein is Palicourein.